Reading from the N-terminus, the 129-residue chain is Putative CC-type chemokine FPV061 (129 aa).

Belongs to the intercrine beta (chemokine CC) family. Highly divergent.

This Fowlpox virus (strain NVSL) (FPV) protein is Putative CC-type chemokine FPV061.